A 426-amino-acid chain; its full sequence is Protein sum2 (426 aa).

The region spanning 1-80 is the Sm domain; sequence MTEFIGSRIS…VKDLRIEEPA (80 aa). Disordered regions lie at residues 79–100, 204–305, and 348–426; these read PATT…IGSN, GMPS…AKPR, and SCES…ANDQ. Positions 84–93 are enriched in pro residues; it reads SAPPVQPPND. Over residues 226–237 the composition is skewed to polar residues; the sequence is VSASPSLQSMPP. Positions 261–278 are enriched in low complexity; that stretch reads RNSTVTNDRVVNTTVDVS. Residues 279 to 298 are compositionally biased toward polar residues; sequence QSQTVETSGPSKEVPTTQPD. The DFDF domain occupies 296-332; that stretch reads QPDASAAKPRTEFDFQTANQKFQSMKDDLLKGKNDEE. Positions 335-351 match the FFD box motif; sequence EFYKPKQSFFDNISCES. Residues 350–371 show a composition bias toward basic and acidic residues; it reads ESKEKGMEAADRRALRDRERSL. The short motif at 360–380 is the TFG box element; it reads DRRALRDRERSLNMETFGVAG. The segment covering 384 to 401 has biased composition (basic residues); sequence RGRRGRGRGRGGRGRGRG. Positions 405–426 are enriched in polar residues; it reads NQYNQYRNSNGSQPRAQPANDQ.

In terms of biological role, required for G2/M phase checkpoint control. The polypeptide is Protein sum2 (sum2) (Schizosaccharomyces pombe (strain 972 / ATCC 24843) (Fission yeast)).